A 382-amino-acid polypeptide reads, in one-letter code: Lipid-A-disaccharide synthase (382 aa).

Belongs to the LpxB family.

It catalyses the reaction 2-N,3-O-bis[(3R)-3-hydroxytetradecanoyl]-alpha-D-glucosaminyl 1-phosphate + UDP-2-N,3-O-bis[(3R)-3-hydroxytetradecanoyl]-alpha-D-glucosamine = lipid A disaccharide (E. coli) + UDP + H(+). It carries out the reaction a lipid X + a UDP-2-N,3-O-bis[(3R)-3-hydroxyacyl]-alpha-D-glucosamine = a lipid A disaccharide + UDP + H(+). It participates in glycolipid biosynthesis; lipid IV(A) biosynthesis; lipid IV(A) from (3R)-3-hydroxytetradecanoyl-[acyl-carrier-protein] and UDP-N-acetyl-alpha-D-glucosamine: step 5/6. Its function is as follows. Condensation of UDP-2,3-diacylglucosamine and 2,3-diacylglucosamine-1-phosphate to form lipid A disaccharide, a precursor of lipid A, a phosphorylated glycolipid that anchors the lipopolysaccharide to the outer membrane of the cell. This Salmonella arizonae (strain ATCC BAA-731 / CDC346-86 / RSK2980) protein is Lipid-A-disaccharide synthase.